The following is a 216-amino-acid chain: Probable GTP-binding protein EngB (216 aa).

Residues 37 to 214 (GSVEIAFAGR…RAAMIRLLDE (178 aa)) form the EngB-type G domain. GTP-binding positions include 45-52 (GRSNVGKS), 72-76 (GRTQE), 92-95 (DMPG), 159-162 (TKAD), and 193-195 (TSS). Residues Ser-52 and Thr-74 each coordinate Mg(2+).

It belongs to the TRAFAC class TrmE-Era-EngA-EngB-Septin-like GTPase superfamily. EngB GTPase family. The cofactor is Mg(2+).

Functionally, necessary for normal cell division and for the maintenance of normal septation. The polypeptide is Probable GTP-binding protein EngB (Rhodopseudomonas palustris (strain TIE-1)).